Consider the following 831-residue polypeptide: Translation initiation factor IF-2 (831 aa).

In terms of domain architecture, tr-type G spans 329 to 499; the sequence is TRAPVVTVMG…LLISEMQDLK (171 aa). Residues 338–345 form a G1 region; it reads GHVDHGKT. GTP is bound at residue 338 to 345; it reads GHVDHGKT. Residues 363–367 are G2; the sequence is GITQH. The segment at 385–388 is G3; sequence DTPG. Residues 385-389 and 439-442 contribute to the GTP site; these read DTPGH and NKID. Residues 439 to 442 are G4; it reads NKID. Residues 475–477 form a G5 region; it reads SAL.

It belongs to the TRAFAC class translation factor GTPase superfamily. Classic translation factor GTPase family. IF-2 subfamily.

Its subcellular location is the cytoplasm. Functionally, one of the essential components for the initiation of protein synthesis. Protects formylmethionyl-tRNA from spontaneous hydrolysis and promotes its binding to the 30S ribosomal subunits. Also involved in the hydrolysis of GTP during the formation of the 70S ribosomal complex. The protein is Translation initiation factor IF-2 (infB) of Rickettsia prowazekii (strain Madrid E).